Reading from the N-terminus, the 171-residue chain is 2-vinyl bacteriochlorophyllide hydratase (171 aa).

It functions in the pathway porphyrin-containing compound metabolism; bacteriochlorophyll biosynthesis (light-independent). This is 2-vinyl bacteriochlorophyllide hydratase (bchF) from Rhodobacter capsulatus (strain ATCC BAA-309 / NBRC 16581 / SB1003).